Consider the following 542-residue polypeptide: Protein MPA43 (542 aa).

The protein is Protein MPA43 (MPA43) of Saccharomyces cerevisiae (strain ATCC 204508 / S288c) (Baker's yeast).